Here is a 220-residue protein sequence, read N- to C-terminus: MMIAGIDEAGKGPVIGPMCIGGVKIDESKAHILKVLGVADSKKLTPKKREQLASQIKKHADGYFIFEVSPSQIDELRKIMSMNEIMVVCFAKVLEQLKPDIVYADAADVKAERFAENLLRQYAKTSPDHAKKIKVVSMHQADAIYPVVSAASIIAKVRRDELIEELKREWCIDFGSGYPSDPKTRGFLLKWGKEHGGDFPDIVRQSWQTVENIREELKKS.

An RNase H type-2 domain is found at 1-219; that stretch reads MMIAGIDEAG…VENIREELKK (219 aa). Residues aspartate 7, glutamate 8, and aspartate 105 each contribute to the a divalent metal cation site.

The protein belongs to the RNase HII family. The cofactor is Mn(2+). It depends on Mg(2+) as a cofactor.

The protein resides in the cytoplasm. It catalyses the reaction Endonucleolytic cleavage to 5'-phosphomonoester.. In terms of biological role, endonuclease that specifically degrades the RNA of RNA-DNA hybrids. This is Ribonuclease HII from Methanosarcina mazei (strain ATCC BAA-159 / DSM 3647 / Goe1 / Go1 / JCM 11833 / OCM 88) (Methanosarcina frisia).